Consider the following 563-residue polypeptide: Arginine--tRNA ligase (563 aa).

The short motif at 121-131 (PNIAKPFSIGH) is the 'HIGH' region element.

The protein belongs to the class-I aminoacyl-tRNA synthetase family. In terms of assembly, monomer.

It localises to the cytoplasm. It carries out the reaction tRNA(Arg) + L-arginine + ATP = L-arginyl-tRNA(Arg) + AMP + diphosphate. The polypeptide is Arginine--tRNA ligase (Streptococcus pneumoniae (strain P1031)).